A 93-amino-acid chain; its full sequence is Small ribosomal subunit protein uS19 (93 aa).

The protein belongs to the universal ribosomal protein uS19 family.

Its function is as follows. Protein S19 forms a complex with S13 that binds strongly to the 16S ribosomal RNA. The chain is Small ribosomal subunit protein uS19 from Rhodococcus erythropolis (strain PR4 / NBRC 100887).